Reading from the N-terminus, the 360-residue chain is Peptide chain release factor 1 (360 aa).

N5-methylglutamine is present on Gln236.

The protein belongs to the prokaryotic/mitochondrial release factor family. Post-translationally, methylated by PrmC. Methylation increases the termination efficiency of RF1.

The protein localises to the cytoplasm. Functionally, peptide chain release factor 1 directs the termination of translation in response to the peptide chain termination codons UAG and UAA. This is Peptide chain release factor 1 from Limosilactobacillus fermentum (strain NBRC 3956 / LMG 18251) (Lactobacillus fermentum).